The sequence spans 353 residues: Quinolinate synthase (353 aa).

2 residues coordinate iminosuccinate: H47 and S68. Position 113 (C113) interacts with [4Fe-4S] cluster. Residues Y139–N141 and S156 contribute to the iminosuccinate site. C200 provides a ligand contact to [4Fe-4S] cluster. Iminosuccinate-binding positions include H226–E228 and T243. Position 297 (C297) interacts with [4Fe-4S] cluster.

This sequence belongs to the quinolinate synthase family. Type 1 subfamily. [4Fe-4S] cluster serves as cofactor.

It localises to the cytoplasm. The catalysed reaction is iminosuccinate + dihydroxyacetone phosphate = quinolinate + phosphate + 2 H2O + H(+). It functions in the pathway cofactor biosynthesis; NAD(+) biosynthesis; quinolinate from iminoaspartate: step 1/1. In terms of biological role, catalyzes the condensation of iminoaspartate with dihydroxyacetone phosphate to form quinolinate. This is Quinolinate synthase from Serratia proteamaculans (strain 568).